The following is a 219-amino-acid chain: Response regulator ArlR (219 aa).

The region spanning 3-116 (NILIVEDEQN…ELFARIRAVL (114 aa)) is the Response regulatory domain. Residue aspartate 52 is modified to 4-aspartylphosphate. Residues 122–219 (KDIIDINGIK…TVRGVGYVIR (98 aa)) constitute a DNA-binding region (ompR/PhoB-type).

Post-translationally, phosphorylated by ArlS.

It localises to the cytoplasm. Its function is as follows. Member of the two-component regulatory system ArlS/ArlR. The polypeptide is Response regulator ArlR (arlR) (Staphylococcus haemolyticus (strain JCSC1435)).